The primary structure comprises 457 residues: D-inositol 3-phosphate glycosyltransferase (457 aa).

Residue H34 participates in 1D-myo-inositol 3-phosphate binding. UDP-N-acetyl-alpha-D-glucosamine-binding positions include 40-41 (QP) and G48. Residues 45–50 (DAGGMN), K103, Y136, T160, and R180 each bind 1D-myo-inositol 3-phosphate. UDP-N-acetyl-alpha-D-glucosamine contacts are provided by R267, K272, and V333. Mg(2+) is bound by residues F342, R343, and A345. Residues E355 and E363 each contribute to the UDP-N-acetyl-alpha-D-glucosamine site. Residue T369 participates in Mg(2+) binding.

This sequence belongs to the glycosyltransferase group 1 family. MshA subfamily. Homodimer.

It carries out the reaction 1D-myo-inositol 3-phosphate + UDP-N-acetyl-alpha-D-glucosamine = 1D-myo-inositol 2-acetamido-2-deoxy-alpha-D-glucopyranoside 3-phosphate + UDP + H(+). Its function is as follows. Catalyzes the transfer of a N-acetyl-glucosamine moiety to 1D-myo-inositol 3-phosphate to produce 1D-myo-inositol 2-acetamido-2-deoxy-glucopyranoside 3-phosphate in the mycothiol biosynthesis pathway. The protein is D-inositol 3-phosphate glycosyltransferase of Streptomyces coelicolor (strain ATCC BAA-471 / A3(2) / M145).